The primary structure comprises 100 residues: Urease subunit gamma (100 aa).

This sequence belongs to the urease gamma subunit family. Heterotrimer of UreA (gamma), UreB (beta) and UreC (alpha) subunits. Three heterotrimers associate to form the active enzyme.

It is found in the cytoplasm. It carries out the reaction urea + 2 H2O + H(+) = hydrogencarbonate + 2 NH4(+). It participates in nitrogen metabolism; urea degradation; CO(2) and NH(3) from urea (urease route): step 1/1. This Corynebacterium urealyticum (strain ATCC 43042 / DSM 7109) protein is Urease subunit gamma.